The sequence spans 907 residues: Protein translocase subunit SecA (907 aa).

ATP is bound by residues Gln87, 105-109 (GEGKT), and Asp511. Zn(2+)-binding residues include Cys891, Cys893, Cys902, and His903.

Belongs to the SecA family. Monomer and homodimer. Part of the essential Sec protein translocation apparatus which comprises SecA, SecYEG and auxiliary proteins SecDF-YajC and YidC. The cofactor is Zn(2+).

It localises to the cell inner membrane. The protein localises to the cytoplasm. It carries out the reaction ATP + H2O + cellular proteinSide 1 = ADP + phosphate + cellular proteinSide 2.. Part of the Sec protein translocase complex. Interacts with the SecYEG preprotein conducting channel. Has a central role in coupling the hydrolysis of ATP to the transfer of proteins into and across the cell membrane, serving both as a receptor for the preprotein-SecB complex and as an ATP-driven molecular motor driving the stepwise translocation of polypeptide chains across the membrane. This Aromatoleum aromaticum (strain DSM 19018 / LMG 30748 / EbN1) (Azoarcus sp. (strain EbN1)) protein is Protein translocase subunit SecA.